The primary structure comprises 2136 residues: MKQKLPKKKSLYKNLDLDEIQKIQNLGNPYTKWSLIRLLIAIFSNKRNFSTLLDFQILTSLFFRDLYNSKKKKKFLLNILVFLTLPFFVYILIDKSIVEQQNFDFLKIQKQNFIEKNNKSILKNNFYFLNTKFDIFLHNFFSLKKKKWYKNSLLNLIDFRSILKKKEILNLHWWKFLVLEQIQSNWKISEESLSELKIVLEQKNIDELKHFFEFYINQKIYPNNNWEYYFYSIFINQLKIDIKNSKYNKNSIGFEVFLAFCEKLLFEVEFLSKPNNNNLQMKLNCLENFSFLDIFCILNKKLPWVNKKIFKNLQNFNESDKKLIESFFLLKIKGNLYFKNYIEFVTWQSYKKDCLDFNKFNELNNSEIYIKIEELFSDYIYKFSKYILYEGKKSKTIIKQSFNNNIYYKKLNSIFNFNTIFYFDSNNLLFDWLKKNYYINNKPFLKSFLIYSSISNQFILFFKQKNSKSFNKNLVKKNSKDVITNVFSKENKIEINNFSKSIYYAFFEILSINEIDNKFVINKISLKNINKKKQKRFYLNKIKSSDNFRFINLWKIKNYSSQQFVSNNSFLLNPAFEILQQNYYLKKKNILFFKKLNEVFSNFFYFQYYKCKKLNIFLKFASLEKILKKRNKKFTISIKLFKKFYKNKLNENGEYKIESQILQNEKELNKKRKKNFQFNPNIKILSFYNSSKKNIYLQNKYFFNKNLINNKLITWKKISNKLVISNSEYNKIIWNKKNMKFFSFSKNSVLDTFFFNKKSFNIITVIFDKLKKIQLNFQEIQKILNCFSLFFNSKNIKKTKIFKNSYFINENLTTTFSFNDKEFNIFFLELFISEINNDFLMRFFKKYLYYRIYKDKEILFNPIENRQLLQNFFEKTKILTFIDFLQDPELNYNNRFIFHLEKKTIKNNNLLYLRLLKIFLKDKRNFLLINEIKSFIEKKNNLFIKSQLSNVLLVKNSYKFFDNIFNFHFLKQKEKNIEIILNNQNYFEKSLLKKTYLKNLNLNNSYSKFSYKIFIFQLLNILNKNNYKTFQWISELIFYSKNLNYKIQNKIEKNNYCYNKNISYKKKKIKTVNFFEKNNLFQTNNSWFFTLEWWEYNTYILLQIIQETFFQITDVLEYFKKKKIIEKNLKFFLKSKKISLKTLSFHNFKLKWNLRFFNEINYKKNYLLNFLWSDFNLINNCNNLYWVIFSLVIFIFLYYQKIFSIIIGSDCFHLWKNFEIIQYLTDRSRSLYFTKLTRRNKTALNKTENLLSYFFQNLTHYITNIKFYLLTKKNLKKWLINNKTLDLSRRKRKLLVQSLITHNKIQNYGFELNSNKQFFTSYFGYQITNQQGLLYFQYLAQFFQKNLINNSLDLANKWIVFSFWHKIFSSQKLRQTNNIELGFQNIPVPLQFGLSYSKGILLIGPIETGRSYLIKNLAAESYVPLFKISINKLLYNKPDVITESWMNILIESLRRLNLTLDFAKKMSPCIIWIQNIHQLNVNRLTQNVESDPTFLLGILLKYFQTDFSKTKKNNIIVIGSTHLPKKVDPALISPNRLDKIINVRLFNISQRKKQFPLLLKKKNFQLKENLFFLNEFGSRTMGYNLRDLSALTNEVLLISITKNRSFIDTDTLKLAFHRQIFGLTYTNNKLNFDRIFKIVIYKVGKTIIQNILIKSSSMNLLNIGNFLWKKNFYYLSKWYLEPSIDESIIKELTILTHILACLAGTAARDSWFLLEKKAESLLPIDKLVENDFTLAFSILESFFSEFPWLEICQTNVVNSKKNKIIEFSTKNSMNIMQNGIFAIANKKFIYTQNHLQYKSSLSQQISFNKKKNYEFKNTSWSPRFWRLSFFRSNLFDWIKRPNDFEFSYKFGFTKKKEYLFSANLQKKNNYGQFIEKKKKEQLLYERILPRIRRRNVQELESQFEEILLEEQFEILGFFRLSEQYPMEYQLYNKPRLFIGKRILWDPIGLFFQIRHFVFSRREFFVDEEMLRRLYVTYGARRERERSRSSQKIKQFFLCRGYNKDLISKLSIRWWSQLPINEKKNIDTLKRIEHISIQLKRPQIFTPVYLYQRWLIENSPEKFFRFELLTHRKKWLKINSLLLNDSFIYTTLLEIYEYLLHFFIANKKLLNQMTKILLKKGWLFENEIETIINETRQ.

ATP is bound at residue 1404 to 1411; that stretch reads GPIETGRS.

It belongs to the Ycf2 family.

It is found in the plastid. The protein resides in the chloroplast stroma. Probable ATPase of unknown function. Its presence in a non-photosynthetic plant (Epifagus virginiana) and experiments in tobacco indicate that it has an essential function which is probably not related to photosynthesis. This Marchantia polymorpha (Common liverwort) protein is Protein Ycf2.